The sequence spans 542 residues: Formate--tetrahydrofolate ligase (542 aa).

53–60 is a binding site for ATP; that stretch reads TPAGEGKT.

It belongs to the formate--tetrahydrofolate ligase family.

It carries out the reaction (6S)-5,6,7,8-tetrahydrofolate + formate + ATP = (6R)-10-formyltetrahydrofolate + ADP + phosphate. It functions in the pathway one-carbon metabolism; tetrahydrofolate interconversion. The polypeptide is Formate--tetrahydrofolate ligase (Thermotoga maritima (strain ATCC 43589 / DSM 3109 / JCM 10099 / NBRC 100826 / MSB8)).